Reading from the N-terminus, the 82-residue chain is Delta-conotoxin SVIE (82 aa).

The N-terminal stretch at 1 to 22 (MKLTCVMIVAVLFLTTWTFVTA) is a signal peptide. A propeptide spanning residues 23-51 (DDSRYGLKNLFPKARHEMKNPEASKLNKR) is cleaved from the precursor. Intrachain disulfides connect Cys-54/Cys-69, Cys-61/Cys-73, and Cys-68/Cys-77. The residue at position 65 (Pro-65) is a 4-hydroxyproline.

Belongs to the conotoxin O1 superfamily. Expressed by the venom duct.

The protein resides in the secreted. In terms of biological role, delta-conotoxins bind to site 6 of voltage-gated sodium channels (Nav) and inhibit the inactivation process. Impairs rapid channel inactivation of Nav1.4/SCN4A (Kd=500 nM). Interacts with a conserved hydrophobic triad (YFV) in the domain-4 voltage sensor of sodium channels. In vivo, injection of both native or synthetic peptide induces twitching of back limbs, running in circles, and spastic paralysis. This Conus striatus (Striated cone) protein is Delta-conotoxin SVIE (SO6).